The chain runs to 98 residues: Large ribosomal subunit protein mL53 (98 aa).

The protein belongs to the mitochondrion-specific ribosomal protein mL53 family. Component of the mitochondrial large ribosomal subunit (mt-LSU). Mature N.crassa 74S mitochondrial ribosomes consist of a small (37S) and a large (54S) subunit. The 37S small subunit contains a 16S ribosomal RNA (16S mt-rRNA) and 32 different proteins. The 54S large subunit contains a 23S rRNA (23S mt-rRNA) and 42 different proteins.

It is found in the mitochondrion. Functionally, component of the mitochondrial ribosome (mitoribosome), a dedicated translation machinery responsible for the synthesis of mitochondrial genome-encoded proteins, including at least some of the essential transmembrane subunits of the mitochondrial respiratory chain. The mitoribosomes are attached to the mitochondrial inner membrane and translation products are cotranslationally integrated into the membrane. This is Large ribosomal subunit protein mL53 (mrpl44) from Neurospora crassa (strain ATCC 24698 / 74-OR23-1A / CBS 708.71 / DSM 1257 / FGSC 987).